Consider the following 185-residue polypeptide: Small ribosomal subunit protein uS5 (185 aa).

Residues 29–92 form the S5 DRBM domain; it reads LEEKVVKINR…EKAKKQLVRI (64 aa).

It belongs to the universal ribosomal protein uS5 family. Part of the 30S ribosomal subunit. Contacts proteins S4 and S8.

Its function is as follows. With S4 and S12 plays an important role in translational accuracy. Functionally, located at the back of the 30S subunit body where it stabilizes the conformation of the head with respect to the body. In Aster yellows witches'-broom phytoplasma (strain AYWB), this protein is Small ribosomal subunit protein uS5.